Consider the following 189-residue polypeptide: Cold-regulated 413 plasma membrane protein 3 (189 aa).

Residues 1 to 24 are Extracellular-facing; sequence MENIEYLNEIQAVAGKLIHSYGVP. Residues 25–45 traverse the membrane as a helical segment; the sequence is VMITLFLRWLASIVAVFLMIL. Residues 46–55 lie on the Cytoplasmic side of the membrane; it reads DQTKWKYSNN. The chain crosses the membrane as a helical span at residues 56–76; that stretch reads IMASLLAPYLFSSLPIVIFQV. Over 77–79 the chain is Extracellular; that stretch reads LRN. A helical membrane pass occupies residues 80–100; sequence GVGKWIALLTVILRLFLPNHF. Residues 101-104 lie on the Cytoplasmic side of the membrane; sequence HESL. A helical transmembrane segment spans residues 105 to 125; the sequence is EIPGATILLIVVTPSDIGAIF. Over 126–168 the chain is Extracellular; the sequence is RDDLRYTGGDVCLLTSFYLINKHTKACGGIKNSFTQKDKVTYS. The helical transmembrane segment at 169 to 189 threads the bilayer; that stretch reads ICLWILFVYPILSSFAALFYL.

This sequence belongs to the Cold-regulated 413 protein family.

It is found in the cell membrane. This chain is Cold-regulated 413 plasma membrane protein 3, found in Arabidopsis thaliana (Mouse-ear cress).